The following is a 161-amino-acid chain: Regulator of ribonuclease activity A (161 aa).

The protein belongs to the RraA family. In terms of assembly, homotrimer. Binds to both RNA-binding sites in the C-terminal region of Rne and to RhlB.

Its subcellular location is the cytoplasm. Globally modulates RNA abundance by binding to RNase E (Rne) and regulating its endonucleolytic activity. Can modulate Rne action in a substrate-dependent manner by altering the composition of the degradosome. Modulates RNA-binding and helicase activities of the degradosome. The sequence is that of Regulator of ribonuclease activity A from Edwardsiella ictaluri (strain 93-146).